The sequence spans 169 residues: uncharacterized protein (169 aa).

This is an uncharacterized protein from Autographa californica nuclear polyhedrosis virus (AcMNPV).